Reading from the N-terminus, the 55-residue chain is ATP synthase F(0) complex subunit 8 (55 aa).

The chain crosses the membrane as a helical span at residues leucine 4 to leucine 24.

It belongs to the ATPase protein 8 family. In terms of assembly, component of the ATP synthase complex composed at least of ATP5F1A/subunit alpha, ATP5F1B/subunit beta, ATP5MC1/subunit c (homooctomer), MT-ATP6/subunit a, MT-ATP8/subunit 8, ATP5ME/subunit e, ATP5MF/subunit f, ATP5MG/subunit g, ATP5MK/subunit k, ATP5MJ/subunit j, ATP5F1C/subunit gamma, ATP5F1D/subunit delta, ATP5F1E/subunit epsilon, ATP5PF/subunit F6, ATP5PB/subunit b, ATP5PD/subunit d, ATP5PO/subunit OSCP. ATP synthase complex consists of a soluble F(1) head domain (subunits alpha(3) and beta(3)) - the catalytic core - and a membrane F(0) domain - the membrane proton channel (subunits c, a, 8, e, f, g, k and j). These two domains are linked by a central stalk (subunits gamma, delta, and epsilon) rotating inside the F1 region and a stationary peripheral stalk (subunits F6, b, d, and OSCP).

It is found in the mitochondrion membrane. Its function is as follows. Subunit 8, of the mitochondrial membrane ATP synthase complex (F(1)F(0) ATP synthase or Complex V) that produces ATP from ADP in the presence of a proton gradient across the membrane which is generated by electron transport complexes of the respiratory chain. ATP synthase complex consist of a soluble F(1) head domain - the catalytic core - and a membrane F(1) domain - the membrane proton channel. These two domains are linked by a central stalk rotating inside the F(1) region and a stationary peripheral stalk. During catalysis, ATP synthesis in the catalytic domain of F(1) is coupled via a rotary mechanism of the central stalk subunits to proton translocation. In vivo, can only synthesize ATP although its ATP hydrolase activity can be activated artificially in vitro. Part of the complex F(0) domain. The polypeptide is ATP synthase F(0) complex subunit 8 (Pelomedusa subrufa (African side-necked turtle)).